The sequence spans 77 residues: Protein UL148C (77 aa).

2 helical membrane-spanning segments follow: residues 10–30 (VLYL…AVAV) and 35–55 (IAWA…VGAA).

Its subcellular location is the host membrane. This Homo sapiens (Human) protein is Protein UL148C (UL148C).